Here is a 197-residue protein sequence, read N- to C-terminus: UPF0228 protein MA_3125 (197 aa).

It belongs to the UPF0228 family.

The polypeptide is UPF0228 protein MA_3125 (Methanosarcina acetivorans (strain ATCC 35395 / DSM 2834 / JCM 12185 / C2A)).